A 121-amino-acid chain; its full sequence is Large ribosomal subunit protein uL18 (121 aa).

Belongs to the universal ribosomal protein uL18 family. As to quaternary structure, part of the 50S ribosomal subunit; part of the 5S rRNA/L5/L18/L25 subcomplex. Contacts the 5S and 23S rRNAs.

In terms of biological role, this is one of the proteins that bind and probably mediate the attachment of the 5S RNA into the large ribosomal subunit, where it forms part of the central protuberance. The polypeptide is Large ribosomal subunit protein uL18 (Ehrlichia chaffeensis (strain ATCC CRL-10679 / Arkansas)).